A 233-amino-acid chain; its full sequence is MTADPRLIVPLDLPTVDDARAMVERLGDAVSFYKIGLELLASDGMGLAHDLKASGKSIFLDWKLHDIGATVERSARVLATSGCDLLTVHAEPQVMQAAVKARGDSSLKILAVTVLTSLTDADLVEMGYAFTARDLVERRVRQALACGVDGIVSSPHEAALAREIANDAGQPEFLIVTPGVRPEWSAKNDQARAATPADALRAGATHLVCGRPITAANDPREAALKVVTEMAGI.

Substrate-binding positions include Asp12, Lys34, 61-70, Thr116, Arg181, Gln190, Gly210, and Arg211; that span reads DWKLHDIGAT. Lys63 functions as the Proton donor in the catalytic mechanism.

Belongs to the OMP decarboxylase family. Type 1 subfamily. In terms of assembly, homodimer.

The catalysed reaction is orotidine 5'-phosphate + H(+) = UMP + CO2. It functions in the pathway pyrimidine metabolism; UMP biosynthesis via de novo pathway; UMP from orotate: step 2/2. Catalyzes the decarboxylation of orotidine 5'-monophosphate (OMP) to uridine 5'-monophosphate (UMP). The sequence is that of Orotidine 5'-phosphate decarboxylase from Caulobacter vibrioides (strain ATCC 19089 / CIP 103742 / CB 15) (Caulobacter crescentus).